The following is a 95-amino-acid chain: UPF0358 protein BA_4159/GBAA_4159/BAS3861 (95 aa).

Belongs to the UPF0358 family.

The polypeptide is UPF0358 protein BA_4159/GBAA_4159/BAS3861 (Bacillus anthracis).